A 445-amino-acid polypeptide reads, in one-letter code: Fatty acid desaturase 3 (445 aa).

The disordered stretch occupies residues Met1 to Pro21. At Met1–Thr133 the chain is on the cytoplasmic side. A Cytochrome b5 heme-binding domain is found at Leu20–Ala97. A helical membrane pass occupies residues Phe134 to Tyr154. The Lumenal segment spans residues Leu155–Gly159. A helical membrane pass occupies residues Trp160–Leu180. At Gln181–Gln263 the chain is on the cytoplasmic side. The short motif at His182 to His186 is the Histidine box-1 element. Positions His219 to His223 match the Histidine box-2 motif. The helical transmembrane segment at His264–Asn284 threads the bilayer. Topologically, residues Leu285–Arg306 are lumenal. Residues Phe307 to Val327 form a helical membrane-spanning segment. The Cytoplasmic portion of the chain corresponds to Arg328–Gln445. Residues Gln383 to His387 carry the Histidine box-3 motif.

This sequence belongs to the fatty acid desaturase type 1 family. As to expression, highly expressed in various organs and tissues including liver, kidney, brain, lung, pancreas, testis, ovary and skeletal muscle (at protein level).

It is found in the endoplasmic reticulum membrane. The enzyme catalyses an N-acylsphing-4-enine + 2 Fe(II)-[cytochrome b5] + O2 + 2 H(+) = an N-acyl-sphinga-4E,14Z-dienine + 2 Fe(III)-[cytochrome b5] + 2 H2O. It carries out the reaction N-(hexanoyl)sphing-4-enine + 2 Fe(II)-[cytochrome b5] + O2 + 2 H(+) = N-hexanoyl-sphinga-4E,14Z-dienine + 2 Fe(III)-[cytochrome b5] + 2 H2O. The catalysed reaction is sphing-4-enine + 2 Fe(II)-[cytochrome b5] + O2 + 2 H(+) = sphinga-4E,14Z-dienine + 2 Fe(III)-[cytochrome b5] + 2 H2O. It catalyses the reaction (11E)-octadecenoyl-CoA + 2 Fe(II)-[cytochrome b5] + O2 + 2 H(+) = (11E,13Z)-octadecadienoyl-CoA + 2 Fe(III)-[cytochrome b5] + 2 H2O. The enzyme catalyses N-acyl-1-deoxysphinganine + 2 Fe(II)-[cytochrome b5] + O2 + 2 H(+) = N-acyl-1-deoxysphing-14Z-enine + 2 Fe(III)-[cytochrome b5] + 2 H2O. It carries out the reaction an N-acylsphinganine + 2 Fe(II)-[cytochrome b5] + O2 + 2 H(+) = an N-acylsphing-14Z-enine + 2 Fe(III)-[cytochrome b5] + 2 H2O. It participates in lipid metabolism; sphingolipid metabolism. Its pathway is lipid metabolism; polyunsaturated fatty acid biosynthesis. In terms of biological role, mammals have different sphingoid bases that differ in their length and/or pattern of desaturation and hydroxyl groups. The predominant sphingoid base that comprises mammalian ceramides is sphing-4-enine (sphingosine or SPH) which has a trans (E) desaturation at carbon 4. FADS3 is a desaturase that introduces a cis (Z) double bond between carbon 14 and carbon 15 of the sphingoid base (also known as long chain base, LCB), producing LCBs such as sphinga-4,14-dienine (SPD, d18:2(4E,14Z)) from SPH. Prefers SPH-containing ceramides (N-acylsphing-4-enines) as substrates. Capable of metabolizing also the SPH in its free form. SPD ceramides occur widely in mammalian tissues and cells. Due to their unusual structure containing a cis double bond, SPD ceramides may have an opposite, negative role in lipid microdomain formation relative to conventional ceramides. Could be involved in the detoxification of 1-deoxy sphingolipids, by desaturating the cytotoxic 1-deoxysphinganine (1-deoxySA, m18:0), produced under pathological conditions, to 1-deoxysphingenine (1-deoxysphingosine, 1-deoxySO, m18:1). Although prefers SPH-containing ceramides (N-acylsphing-4-enines) as substrates, it also exhibits activity toward dihydrosphingosine-containing CERs (N-acylsphinganines) and produces 14Z-SPH-containing sphingolipids,which can be found in patients with DEGS1 mutations. Its desaturase mechanism involves an electron transfer facilitated by cytochrome b5. FADS3 also acts as a methyl-end fatty acyl coenzyme A (CoA) desaturase that introduces a cis double bond between the preexisting double bond and the terminal methyl group of the fatty acyl chain. Desaturates (11E)-octadecenoate (trans-vaccenoate, the predominant trans fatty acid in human milk) at carbon 13 to generate (11E,13Z)-octadecadienoate (also known as conjugated linoleic acid 11E,13Z-CLA). The polypeptide is Fatty acid desaturase 3 (Homo sapiens (Human)).